The following is a 193-amino-acid chain: Probable DNA-directed RNA polymerase subunit delta (193 aa).

Residues 14–83 form the HTH HARE-type domain; it reads LSMIEVARAI…GENKWGLRSW (70 aa). Acidic residues-rich tracts occupy residues 117–134 and 142–193; these read GDDD…DEDN and EYDD…VVDE. The interval 117–193 is disordered; it reads GDDDAIDYGH…EYSDEEVVDE (77 aa).

Belongs to the RpoE family. RNAP is composed of a core of 2 alpha, a beta and a beta' subunits. The core is associated with a delta subunit and one of several sigma factors.

Participates in both the initiation and recycling phases of transcription. In the presence of the delta subunit, RNAP displays an increased specificity of transcription, a decreased affinity for nucleic acids, and an increased efficiency of RNA synthesis because of enhanced recycling. The chain is Probable DNA-directed RNA polymerase subunit delta from Streptococcus suis (strain 05ZYH33).